The following is a 299-amino-acid chain: Pyridoxal 5'-phosphate synthase subunit PdxS (299 aa).

D-ribose 5-phosphate is bound at residue Asp29. Lys86 (schiff-base intermediate with D-ribose 5-phosphate) is an active-site residue. D-ribose 5-phosphate is bound at residue Gly158. Arg170 contributes to the D-glyceraldehyde 3-phosphate binding site. Residues Gly219 and Gly240–Ser241 each bind D-ribose 5-phosphate.

The protein belongs to the PdxS/SNZ family. In terms of assembly, in the presence of PdxT, forms a dodecamer of heterodimers.

It catalyses the reaction aldehydo-D-ribose 5-phosphate + D-glyceraldehyde 3-phosphate + L-glutamine = pyridoxal 5'-phosphate + L-glutamate + phosphate + 3 H2O + H(+). Its pathway is cofactor biosynthesis; pyridoxal 5'-phosphate biosynthesis. Catalyzes the formation of pyridoxal 5'-phosphate from ribose 5-phosphate (RBP), glyceraldehyde 3-phosphate (G3P) and ammonia. The ammonia is provided by the PdxT subunit. Can also use ribulose 5-phosphate and dihydroxyacetone phosphate as substrates, resulting from enzyme-catalyzed isomerization of RBP and G3P, respectively. The polypeptide is Pyridoxal 5'-phosphate synthase subunit PdxS (Protochlamydia amoebophila (strain UWE25)).